The primary structure comprises 615 residues: Chromosomal replication initiator protein DnaA (615 aa).

The segment at 1–88 (MSEGQINLAM…RVAVTVDPSA (88 aa)) is domain I, interacts with DnaA modulators. Residues 85–272 (DPSAVPPSAP…PTSGGPDQLN (188 aa)) form a disordered region. Residues 88 to 269 (AVPPSAPTEE…STNPTSGGPD (182 aa)) are domain II. 2 stretches are compositionally biased toward low complexity: residues 94–112 (PTEEASSTSSPDSSHPAPD) and 173–190 (PSSADPGSPASPAPVAES). The domain III, AAA+ region stretch occupies residues 270 to 486 (QLNPKYTFDT…GALIRVTAFA (217 aa)). Residues Gly314, Gly316, Lys317, and Thr318 each coordinate ATP. The domain IV, binds dsDNA stretch occupies residues 487 to 615 (SLNRQSVDLH…QQAHHNHHHL (129 aa)).

Belongs to the DnaA family. As to quaternary structure, oligomerizes as a right-handed, spiral filament on DNA at oriC.

Its subcellular location is the cytoplasm. Its function is as follows. Plays an essential role in the initiation and regulation of chromosomal replication. ATP-DnaA binds to the origin of replication (oriC) to initiate formation of the DNA replication initiation complex once per cell cycle. Binds the DnaA box (a 9 base pair repeat at the origin) and separates the double-stranded (ds)DNA. Forms a right-handed helical filament on oriC DNA; dsDNA binds to the exterior of the filament while single-stranded (ss)DNA is stabiized in the filament's interior. The ATP-DnaA-oriC complex binds and stabilizes one strand of the AT-rich DNA unwinding element (DUE), permitting loading of DNA polymerase. After initiation quickly degrades to an ADP-DnaA complex that is not apt for DNA replication. Binds acidic phospholipids. This is Chromosomal replication initiator protein DnaA from Thermobifida fusca (strain YX).